The sequence spans 505 residues: COMPASS component BRE2 (505 aa).

One can recognise a B30.2/SPRY domain in the interval 70–295 (SANPFFTILG…LKQETTNKEF (226 aa)). Position 227 is a phosphoserine (Ser227). The segment at 271 to 290 (EPWREDAENGPSRKKLKQET) is disordered. Lys318 provides a ligand contact to DNA. Residues 398 to 420 (RDESNDKNTTSAKKKKQQQKKKK) form a disordered region. The span at 409–420 (AKKKKQQQKKKK) shows a compositional bias: basic residues.

This sequence belongs to the cclA family. As to quaternary structure, component of the Set1C/COMPASS complex which consists of SET1(2), BRE2(2), SPP1(2), SDC1(1), SHG1(1), SWD1(1), SWD2(1), and SWD3(1). Interacts directly with SDC1.

It localises to the nucleus. It is found in the chromosome. Its subcellular location is the telomere. Functionally, component of the Set1C/COMPASS complex that specifically mono-, di- and trimethylates histone H3 to form H3K4me1/2/3, which subsequently plays a role in telomere length maintenance and transcription elongation regulation. COMPASS recognizes ubiquitinated H2B on one face of the nucleosome which stimulates the methylation of H3 on the opposing face. The chain is COMPASS component BRE2 from Saccharomyces cerevisiae (strain ATCC 204508 / S288c) (Baker's yeast).